Consider the following 152-residue polypeptide: Protein-export protein SecB (152 aa).

The protein belongs to the SecB family. Homotetramer, a dimer of dimers. One homotetramer interacts with 1 SecA dimer.

The protein resides in the cytoplasm. In terms of biological role, one of the proteins required for the normal export of preproteins out of the cell cytoplasm. It is a molecular chaperone that binds to a subset of precursor proteins, maintaining them in a translocation-competent state. It also specifically binds to its receptor SecA. The protein is Protein-export protein SecB of Acinetobacter baumannii (strain AB307-0294).